A 179-amino-acid polypeptide reads, in one-letter code: Large ribosomal subunit protein uL5 (179 aa).

This sequence belongs to the universal ribosomal protein uL5 family. In terms of assembly, part of the 50S ribosomal subunit; part of the 5S rRNA/L5/L18/L25 subcomplex. Contacts the 5S rRNA and the P site tRNA. Forms a bridge to the 30S subunit in the 70S ribosome.

This is one of the proteins that bind and probably mediate the attachment of the 5S RNA into the large ribosomal subunit, where it forms part of the central protuberance. In the 70S ribosome it contacts protein S13 of the 30S subunit (bridge B1b), connecting the 2 subunits; this bridge is implicated in subunit movement. Contacts the P site tRNA; the 5S rRNA and some of its associated proteins might help stabilize positioning of ribosome-bound tRNAs. This Desulfovibrio desulfuricans (strain ATCC 27774 / DSM 6949 / MB) protein is Large ribosomal subunit protein uL5.